We begin with the raw amino-acid sequence, 203 residues long: Ras-like protein family member 10A (203 aa).

Residues M1–M203 form a small GTPase-like region. G11–T18 contributes to the GTP binding site. Residues H33–Y42 carry the Effector region motif. Residues D59–V62 and N129–D132 each bind GTP. A Cysteine methyl ester modification is found at C200. A lipid anchor (S-farnesyl cysteine) is attached at C200. The propeptide at S201–M203 is removed in mature form.

It belongs to the small GTPase superfamily. Ras family. In terms of processing, isoprenylation is essential for nucleolar localization, and the proliferation-inhibiting activity of RASL10A.

It localises to the cell membrane. The protein resides in the nucleus. Its subcellular location is the nucleolus. It carries out the reaction GTP + H2O = GDP + phosphate + H(+). Its function is as follows. Potent inhibitor of cellular proliferation. In Mus musculus (Mouse), this protein is Ras-like protein family member 10A (Rasl10a).